We begin with the raw amino-acid sequence, 181 residues long: dTTP/UTP pyrophosphatase (181 aa).

The Proton acceptor role is filled by Asp67.

This sequence belongs to the Maf family. YhdE subfamily. Requires a divalent metal cation as cofactor.

It localises to the cytoplasm. The catalysed reaction is dTTP + H2O = dTMP + diphosphate + H(+). The enzyme catalyses UTP + H2O = UMP + diphosphate + H(+). Functionally, nucleoside triphosphate pyrophosphatase that hydrolyzes dTTP and UTP. May have a dual role in cell division arrest and in preventing the incorporation of modified nucleotides into cellular nucleic acids. The chain is dTTP/UTP pyrophosphatase from Latilactobacillus sakei subsp. sakei (strain 23K) (Lactobacillus sakei subsp. sakei).